Consider the following 159-residue polypeptide: 6,7-dimethyl-8-ribityllumazine synthase (159 aa).

5-amino-6-(D-ribitylamino)uracil-binding positions include Phe22, 56 to 58, and 80 to 82; these read AFE and AVI. Position 85-86 (85-86) interacts with (2S)-2-hydroxy-3-oxobutyl phosphate; the sequence is AT. His88 serves as the catalytic Proton donor. Phe113 is a 5-amino-6-(D-ribitylamino)uracil binding site. Arg127 provides a ligand contact to (2S)-2-hydroxy-3-oxobutyl phosphate.

The protein belongs to the DMRL synthase family.

It carries out the reaction (2S)-2-hydroxy-3-oxobutyl phosphate + 5-amino-6-(D-ribitylamino)uracil = 6,7-dimethyl-8-(1-D-ribityl)lumazine + phosphate + 2 H2O + H(+). It participates in cofactor biosynthesis; riboflavin biosynthesis; riboflavin from 2-hydroxy-3-oxobutyl phosphate and 5-amino-6-(D-ribitylamino)uracil: step 1/2. Its function is as follows. Catalyzes the formation of 6,7-dimethyl-8-ribityllumazine by condensation of 5-amino-6-(D-ribitylamino)uracil with 3,4-dihydroxy-2-butanone 4-phosphate. This is the penultimate step in the biosynthesis of riboflavin. This Lactiplantibacillus plantarum (strain ATCC BAA-793 / NCIMB 8826 / WCFS1) (Lactobacillus plantarum) protein is 6,7-dimethyl-8-ribityllumazine synthase.